Here is a 991-residue protein sequence, read N- to C-terminus: Collagenase ColT (991 aa).

The first 28 residues, 1–28, serve as a signal peptide directing secretion; that stretch reads MKKKFIKMLCSIAIGCMISTSYSIKVSA. The propeptide occupies 29 to 52; it reads FSNGNTKTNPNGEFKSLSLNSTNP. The tract at residues 53–727 is S1 metalloprotease domain, degrades FALGPA (furylacryloyl-Leu-Gly-Pro-Ala); it reads YKTKYSFNDL…VYDIVFHGLL (675 aa). The interval 57–330 is activator domain; the sequence is YSFNDLNKLS…AIEAIKEDFN (274 aa). The catalytic subdomain stretch occupies residues 340 to 611; that stretch reads DINKLIEEGK…MENLVNNYDN (272 aa). Ca(2+) is bound at residue Glu-440. His-465 contributes to the Zn(2+) binding site. The active site involves Glu-466. His-469 lines the Zn(2+) pocket. Residues Gly-473, Ile-477, and Gly-479 each contribute to the Ca(2+) site. Glu-499 serves as a coordination point for Zn(2+). Residues 619–731 are helper subdomain; the sequence is DDYMKQYDNK…VFHGLLSHNK (113 aa). Collagen-binding domain stretches follow at residues 755-870 and 878-991; these read IYEK…NISD and IKKI…VIIN. Residues Glu-757, Glu-759, Asn-761, Asp-784, Asp-787, Glu-883, Glu-885, Asn-887, Asp-888, Asp-910, and Asp-913 each contribute to the Ca(2+) site.

The protein belongs to the peptidase M9B family. Collagenase subfamily. Ca(2+) is required as a cofactor. It depends on Zn(2+) as a cofactor.

The protein localises to the secreted. The enzyme catalyses Digestion of native collagen in the triple helical region at Xaa-|-Gly bonds. With synthetic peptides, a preference is shown for Gly at P3 and P1', Pro and Ala at P2 and P2', and hydroxyproline, Ala or Arg at P3'.. With respect to regulation, partially inhibited by 1-10-phenanthroline; inactivation is irreversible. Partially inhibited by EDTA; inactivation is reversible. Inhibited by broad-spectrum zinc metalloprotease inhibitor batimastat. N-aryl mercaptoacetamide-based inhibitors have been isolated that act on clostridial collagenases with submicromolar affinity while having negligibile activity on human collagenases. Clostridial collagenases are among the most efficient degraders of eukaryotic collagen known; saprophytes use collagen as a carbon source while pathogens additionally digest collagen to aid in host colonization. Has both tripeptidylcarboxypeptidase on Gly-X-Y and endopeptidase activities; the endopeptidase cuts within the triple helix region of collagen while tripeptidylcarboxypeptidase successively digests the exposed ends, thus clostridial collagenases can digest large sections of collagen. The activator domain (residues 57-330) and catalytic subdomain (340-611) open and close around substrate allowing digestion when the protein is closed. This chain is Collagenase ColT, found in Clostridium tetani (strain Massachusetts / E88).